The primary structure comprises 270 residues: Pyrroline-5-carboxylate reductase (270 aa).

It belongs to the pyrroline-5-carboxylate reductase family.

It localises to the cytoplasm. It carries out the reaction L-proline + NADP(+) = (S)-1-pyrroline-5-carboxylate + NADPH + 2 H(+). It catalyses the reaction L-proline + NAD(+) = (S)-1-pyrroline-5-carboxylate + NADH + 2 H(+). It participates in amino-acid biosynthesis; L-proline biosynthesis; L-proline from L-glutamate 5-semialdehyde: step 1/1. Catalyzes the reduction of 1-pyrroline-5-carboxylate (PCA) to L-proline. In Corynebacterium melassecola, this protein is Pyrroline-5-carboxylate reductase.